Reading from the N-terminus, the 207-residue chain is Superoxide dismutase [Mn] (207 aa).

4 residues coordinate Mn(2+): His-28, His-76, Asp-160, and His-164.

The protein belongs to the iron/manganese superoxide dismutase family. Mn(2+) serves as cofactor.

It carries out the reaction 2 superoxide + 2 H(+) = H2O2 + O2. Destroys superoxide anion radicals which are normally produced within the cells and which are toxic to biological systems. This Mycobacterium lepraemurium protein is Superoxide dismutase [Mn] (sodA).